The following is an 853-amino-acid chain: DNA mismatch repair protein MutS (853 aa).

Residue 614–621 participates in ATP binding; it reads GPNMGGKS.

The protein belongs to the DNA mismatch repair MutS family.

In terms of biological role, this protein is involved in the repair of mismatches in DNA. It is possible that it carries out the mismatch recognition step. This protein has a weak ATPase activity. This is DNA mismatch repair protein MutS from Escherichia coli (strain 55989 / EAEC).